A 130-amino-acid polypeptide reads, in one-letter code: Large ribosomal subunit protein bL12 (130 aa).

Belongs to the bacterial ribosomal protein bL12 family. As to quaternary structure, homodimer. Part of the ribosomal stalk of the 50S ribosomal subunit. Forms a multimeric L10(L12)X complex, where L10 forms an elongated spine to which 2 to 4 L12 dimers bind in a sequential fashion. Binds GTP-bound translation factors.

Forms part of the ribosomal stalk which helps the ribosome interact with GTP-bound translation factors. Is thus essential for accurate translation. The chain is Large ribosomal subunit protein bL12 from Synechococcus sp. (strain RCC307).